A 502-amino-acid polypeptide reads, in one-letter code: Bone morphogenetic protein receptor type-1B (502 aa).

Positions 1–13 are cleaved as a signal peptide; it reads MLLRSSGKLNVGT. Positions 1-24 are disordered; the sequence is MLLRSSGKLNVGTKKEDGESTAPT. Residues 14–126 are Extracellular-facing; that stretch reads KKEDGESTAP…DFVDGPIHHK (113 aa). 5 disulfides stabilise this stretch: Cys-32/Cys-53, Cys-34/Cys-38, Cys-47/Cys-71, Cys-81/Cys-95, and Cys-96/Cys-102. A helical transmembrane segment spans residues 127–148; it reads ALLISVTVCSLLLVLIILFCYF. Residues 149-502 lie on the Cytoplasmic side of the membrane; it reads RYKRQEARPR…KMSESQDIKL (354 aa). The GS domain occupies 174–203; it reads ESLRDLIEQSQSSGSGSGLPLLVQRTIAKQ. Positions 204-494 constitute a Protein kinase domain; sequence IQMVKQIGKG…LRVKKTLAKM (291 aa). ATP contacts are provided by residues 210 to 218 and Lys-231; that span reads IGKGRYGEV. The Proton acceptor role is filled by Asp-332.

Belongs to the protein kinase superfamily. TKL Ser/Thr protein kinase family. TGFB receptor subfamily. As to quaternary structure, interacts with high affinity with GDF5; positively regulates chondrocyte differentiation. Interacts with SCUBE3. Interacts with TSC22D1/TSC-22. Interacts with TGFBR3. Mg(2+) is required as a cofactor. Requires Mn(2+) as cofactor. In terms of processing, autophosphorylated.

The protein localises to the cell membrane. It carries out the reaction L-threonyl-[receptor-protein] + ATP = O-phospho-L-threonyl-[receptor-protein] + ADP + H(+). The catalysed reaction is L-seryl-[receptor-protein] + ATP = O-phospho-L-seryl-[receptor-protein] + ADP + H(+). Its function is as follows. On ligand binding, forms a receptor complex consisting of two type II and two type I transmembrane serine/threonine kinases. Type II receptors phosphorylate and activate type I receptors which autophosphorylate, then bind and activate SMAD transcriptional regulators. Receptor for BMP7/OP-1. Receptor for GDF5. Positively regulates chondrocyte differentiation through GDF5 interaction. The sequence is that of Bone morphogenetic protein receptor type-1B (Bmpr1b) from Mus musculus (Mouse).